Here is a 160-residue protein sequence, read N- to C-terminus: Small ribosomal subunit protein uS9 (160 aa).

Belongs to the universal ribosomal protein uS9 family.

This is Small ribosomal subunit protein uS9 from Mesorhizobium japonicum (strain LMG 29417 / CECT 9101 / MAFF 303099) (Mesorhizobium loti (strain MAFF 303099)).